A 135-amino-acid chain; its full sequence is MVLETISKIIKTQLPAYLKKFPLPETIGGFARLTVLDWLRLLPLLGILALLGYLTIRPFLPKKKKQKDSLINLKIQKENPKVVNEIDIEDLKSTNVCYCRCWRSKTFPVCDKSHIKHNELTGDNVGPLILKKKIL.

Topologically, residues 1 to 37 are lumenal; it reads MVLETISKIIKTQLPAYLKKFPLPETIGGFARLTVLD. A helical membrane pass occupies residues 38-60; that stretch reads WLRLLPLLGILALLGYLTIRPFL. The Cytoplasmic segment spans residues 61–135; that stretch reads PKKKKQKDSL…GPLILKKKIL (75 aa). Positions 99, 101, 110, and 114 each coordinate [2Fe-2S] cluster.

It belongs to the CISD protein family. CISD2 subfamily. Homodimer. It depends on [2Fe-2S] cluster as a cofactor.

It localises to the endoplasmic reticulum membrane. The protein localises to the mitochondrion outer membrane. Its function is as follows. Regulator of autophagy that contributes to antagonize becn1-mediated cellular autophagy at the endoplasmic reticulum. Participates in the interaction of bcl2 with becn1 and is required for bcl2-mediated depression of endoplasmic reticulum Ca(2+) stores during autophagy. The polypeptide is CDGSH iron-sulfur domain-containing protein 2B (cisd2b) (Salmo salar (Atlantic salmon)).